Reading from the N-terminus, the 84-residue chain is U4-theraphotoxin-Hhn1a (84 aa).

A signal peptide spans 1 to 22 (MKVTLIAILTRAAVLVLHTTAA). The propeptide occupies 23–47 (EELEESQLMEVSMPDTELAAVDEER). 3 disulfide bridges follow: C51/C65, C55/C76, and C70/C81.

This sequence belongs to the neurotoxin 12 (Hwtx-2) family. 02 (Hwtx-2) subfamily. In terms of tissue distribution, expressed by the venom gland.

It localises to the secreted. In terms of biological role, postsynaptic neurotoxin. The sequence is that of U4-theraphotoxin-Hhn1a from Cyriopagopus hainanus (Chinese bird spider).